The chain runs to 189 residues: GTP cyclohydrolase 1 (189 aa).

3 residues coordinate Zn(2+): cysteine 78, histidine 81, and cysteine 150.

It belongs to the GTP cyclohydrolase I family. As to quaternary structure, toroid-shaped homodecamer, composed of two pentamers of five dimers.

It carries out the reaction GTP + H2O = 7,8-dihydroneopterin 3'-triphosphate + formate + H(+). The protein operates within cofactor biosynthesis; 7,8-dihydroneopterin triphosphate biosynthesis; 7,8-dihydroneopterin triphosphate from GTP: step 1/1. This is GTP cyclohydrolase 1 from Bacillus pumilus (strain SAFR-032).